Here is a 139-residue protein sequence, read N- to C-terminus: Endoribonuclease YbeY (139 aa).

Zn(2+) is bound by residues His-99, His-103, and His-109.

It belongs to the endoribonuclease YbeY family. It depends on Zn(2+) as a cofactor.

The protein resides in the cytoplasm. In terms of biological role, single strand-specific metallo-endoribonuclease involved in late-stage 70S ribosome quality control and in maturation of the 3' terminus of the 16S rRNA. The chain is Endoribonuclease YbeY from Sulfurimonas denitrificans (strain ATCC 33889 / DSM 1251) (Thiomicrospira denitrificans (strain ATCC 33889 / DSM 1251)).